The following is a 596-amino-acid chain: Serine/arginine (SR)-type shuttling mRNA binding protein (596 aa).

The segment covering 1–11 has biased composition (polar residues); that stretch reads MSEVEYNQENT. Disordered stretches follow at residues 1-83 and 244-279; these read MSEV…SRKS and DREDEVRYGTSPGGPPRGGGRGGLGGSSGRGSFGPP. Composition is skewed to basic and acidic residues over residues 12–23 and 42–66; these read HYAEVDNFDRDA and SDRRDRDRTDRTDRTDRSDRPRSFN. Residues 182-246 form the RRM 1 domain; that stretch reads FHRQPSIVYT…RQVFVREDRE (65 aa). Residues 259 to 275 are compositionally biased toward gly residues; sequence PRGGGRGGLGGSSGRGS. An RRM 2 domain is found at 302–379; it reads TQLFIGNLPF…RMLEVRLDKF (78 aa). The disordered stretch occupies residues 458–478; that stretch reads GYSTRASGPTSARAPAPPAAP. Positions 480–556 constitute an RRM 3 domain; sequence QQIFVKNLPW…RPLDIEFNRR (77 aa). Residues 563 to 572 are compositionally biased toward gly residues; the sequence is GGGSVNGGND. The disordered stretch occupies residues 563-596; the sequence is GGGSVNGGNDGNAPMVEVSAQDDEDGDAPVPMQG.

Its subcellular location is the nucleus. In terms of biological role, binds to intron-containing transcripts and is involved in quality control for the export of spliced mRNAs from the nucleus. Binds to pre-mRNAs until splicing is completed or until faulty mRNAs are degraded. This Mycosarcoma maydis (Corn smut fungus) protein is Serine/arginine (SR)-type shuttling mRNA binding protein.